The primary structure comprises 278 residues: Protein canopy homolog 3 (278 aa).

A signal peptide spans 1–30 (MDSMPEPASRCLLLLPLLLLLLLLLPAPEL). In terms of domain architecture, Saposin B-type spans 47–271 (SKCEVCKYVA…EGIQKASPLT (225 aa)). Intrachain disulfides connect Cys49/Cys206, Cys52/Cys194, and Cys104/Cys166. Asn153 is a glycosylation site (N-linked (GlcNAc...) asparagine). The stretch at 153–179 (NETSAEVADLKKQCDVLVEEFEEVIED) forms a coiled coil. The segment at 215–278 (KGDTAALGGK…PLTHSPPDEL (64 aa)) is disordered. The span at 233-243 (AKAAGGRSSSS) shows a compositional bias: low complexity.

This sequence belongs to the canopy family. In terms of assembly, interacts with HSP90B1; this interaction is disrupted in the presence of ATP. Interacts with TLR1, TLR2, TLR4 and TLR9. Strongest interaction with TLR4.

The protein localises to the endoplasmic reticulum. In terms of biological role, toll-like receptor (TLR)-specific co-chaperone for HSP90B1. Required for proper TLR folding, except that of TLR3, and hence controls TLR exit from the endoplasmic reticulum. Consequently, required for both innate and adaptive immune responses. In Homo sapiens (Human), this protein is Protein canopy homolog 3 (CNPY3).